We begin with the raw amino-acid sequence, 229 residues long: Large ribosomal subunit protein uL1 (229 aa).

The protein belongs to the universal ribosomal protein uL1 family. Part of the 50S ribosomal subunit.

Functionally, binds directly to 23S rRNA. The L1 stalk is quite mobile in the ribosome, and is involved in E site tRNA release. In terms of biological role, protein L1 is also a translational repressor protein, it controls the translation of the L11 operon by binding to its mRNA. The protein is Large ribosomal subunit protein uL1 of Pediococcus pentosaceus (strain ATCC 25745 / CCUG 21536 / LMG 10740 / 183-1w).